The following is a 393-amino-acid chain: Purine permease 14 (393 aa).

At A2 the chain carries N-acetylalanine. Transmembrane regions (helical) follow at residues 46-66, 90-110, 133-153, 161-181, 189-209, 225-245, 268-288, 308-328, 339-359, and 363-383; these read WPTITISIIFVIIGQSIAKLL, TQSLLQTVGFPLLLLPFLIFI, LAVIYICIGIIMSVQGRLAAM, GVFTLIYTAQLFFTPIFAAFI, WVVISVILAIITGALTLSSSF, WAALFAGICFALLLCNIQNVF, VIIFSSLVATIISVVGLLIAG, VMAMVGQAVSWQVYWVGIVGL, VISVITWPIVSVLVVIFFNFM, and FDAFKGVALVTAVLSAAAYFF.

This sequence belongs to the purine permeases (TC 2.A.7.14) family. As to expression, expressed in seedlings, leaves, embryos, ovules, seeds and the root and shoot meristems. In heart-stage embryos, detected in cells that failed to respond to cytokinins, including the prospective cotyledons.

The protein resides in the cell membrane. Its function is as follows. Purine permease implicated in ATP-dependent cytokinin translocation that controls the spatiotemporal landscape of cytokinin signaling. Depletes ligands from the apoplast, which leads to a suppression of the cytokinin response. In Arabidopsis thaliana (Mouse-ear cress), this protein is Purine permease 14.